Consider the following 588-residue polypeptide: Peptidoglycan D,D-transpeptidase FtsI (588 aa).

The chain crosses the membrane as a helical span at residues 19-39 (FISWRFALLCGCILLALAFLL). Residue serine 307 is the Acyl-ester intermediate of the active site. The propeptide occupies 578 to 588 (INQGEGTGGRS).

Belongs to the transpeptidase family. FtsI subfamily.

The protein resides in the cell inner membrane. The catalysed reaction is Preferential cleavage: (Ac)2-L-Lys-D-Ala-|-D-Ala. Also transpeptidation of peptidyl-alanyl moieties that are N-acyl substituents of D-alanine.. The protein operates within cell wall biogenesis; peptidoglycan biosynthesis. Catalyzes cross-linking of the peptidoglycan cell wall at the division septum. This is Peptidoglycan D,D-transpeptidase FtsI from Escherichia coli O157:H7.